We begin with the raw amino-acid sequence, 126 residues long: Protein ApaG (126 aa).

The ApaG domain maps to 2–126 (SALDDSIRVE…FRLALPGLLH (125 aa)).

In Shewanella sp. (strain MR-4), this protein is Protein ApaG.